We begin with the raw amino-acid sequence, 457 residues long: BAG family molecular chaperone regulator 4 (457 aa).

Positions 1-20 are enriched in low complexity; it reads MSALRRSGYGPSDGPSYGRY. The interval 1-104 is disordered; it reads MSALRRSGYG…PYPGYNSNYW (104 aa). S7 carries the phosphoserine modification. The span at 31–48 shows a compositional bias: pro residues; sequence HVPPPLYPPLRPEPPQPP. 4 positions are modified to omega-N-methylarginine: R41, R54, R108, and R185. 2 disordered regions span residues 128-335 and 348-374; these read LNSY…SDLL and YGNASSEHPSNQVPSNNLPEECFSSDE. The span at 160–193 shows a compositional bias: polar residues; the sequence is YTQSNYSTEVPNTYRSPGNSPTPMSRWMYSQQDC. Over residues 255 to 268 the composition is skewed to low complexity; sequence PWPSAAPSAPSAGS. Positions 284 to 295 are enriched in pro residues; the sequence is PQPPPSPPPQQP. Composition is skewed to polar residues over residues 326–335 and 348–365; these read AVNNDNSDLL and YGNASSEHPSNQVPSNNL. The region spanning 379-456 is the BAG domain; that stretch reads SIKKIIHVLE…AILEKLEKKG (78 aa).

In terms of assembly, binds to the ATPase domain of HSP/HSC70 chaperones. Binds to the death domain of TNFRSF12. Binds to the death domain of TNFRSF1A in the absence of TNF and thereby prevents binding of adapter molecules such as TRADD or TRAF2. Interacts with PRKN.

It is found in the cytoplasm. Its function is as follows. Inhibits the chaperone activity of HSP70/HSC70 by promoting substrate release. Prevents constitutive TNFRSF1A signaling. Negative regulator of PRKN translocation to damaged mitochondria. This chain is BAG family molecular chaperone regulator 4 (Bag4), found in Mus musculus (Mouse).